The chain runs to 394 residues: Maltose permease (394 aa).

The Cytoplasmic segment spans residues 1–11 (MGAAFKWGAAA). A helical transmembrane segment spans residues 12 to 38 (RKTVFPLFYFLIFFAFGALFPLLSVYL). At 39 to 45 (QEEARLS) the chain is on the extracellular side. The helical transmembrane segment at 46 to 74 (GAAIGWIMSLPPIVTMAAQPLWGTAADYT) threads the bilayer. Residues 75 to 78 (RKPV) lie on the Cytoplasmic side of the membrane. Residues 79 to 104 (GLLLAALVLAALFGVMYALAGSYRLF) traverse the membrane as a helical segment. Topologically, residues 105–108 (VVLT) are extracellular. Residues 109 to 126 (VLLSAMQSAIVPLSDSLA) traverse the membrane as a helical segment. Topologically, residues 127 to 137 (LRHVHEQGGNY) are cytoplasmic. A helical membrane pass occupies residues 138–160 (GAIRLWGSLGFAMAVLAVGWLSD). At 161-163 (HIA) the chain is on the extracellular side. A helical membrane pass occupies residues 164–183 (FAVIFYAFSLALLTAAALAT). Topologically, residues 184-213 (RLPRYPMGAPGALTRQDVRGLLASRPFRLL) are cytoplasmic. The helical transmembrane segment at 214-233 (LVATFLLFGPILANNSYFGL) threads the bilayer. Topologically, residues 234-237 (LIHE) are extracellular. A helical membrane pass occupies residues 238 to 262 (LGGTLTGIGLAFLFAAGSEAPFMKA). Residues 263–272 (ADRLIGRFGM) are Cytoplasmic-facing. Residues 273–292 (VRLLLLAALISAARWLAYAA) form a helical membrane-spanning segment. Residues 293 to 295 (DPP) are Extracellular-facing. The chain crosses the membrane as a helical span at residues 296–318 (LWFVYMTTVVQGCSVGLAIPTAL). Residues 319 to 330 (QYARRLAPERVQ) are Cytoplasmic-facing. The helical transmembrane segment at 331–358 (STAVALYSAVGNGLGAWFCTLVGGYLLE) threads the bilayer. Residues 359–361 (RWQ) lie on the Extracellular side of the membrane. The helical transmembrane segment at 362–382 (IGAVYLFFSICTIVGVLVLLL) threads the bilayer. The Cytoplasmic portion of the chain corresponds to 383-394 (LAKRERTAGEEK).

The protein belongs to the major facilitator superfamily.

Its subcellular location is the cell membrane. Functionally, high affinity transport of maltose. This Geobacillus stearothermophilus (Bacillus stearothermophilus) protein is Maltose permease (malA).